Here is a 491-residue protein sequence, read N- to C-terminus: Glutamyl-tRNA(Gln) amidotransferase subunit A (491 aa).

Catalysis depends on charge relay system residues Lys78 and Ser158. The active-site Acyl-ester intermediate is Ser182.

The protein belongs to the amidase family. GatA subfamily. As to quaternary structure, heterotrimer of A, B and C subunits.

It carries out the reaction L-glutamyl-tRNA(Gln) + L-glutamine + ATP + H2O = L-glutaminyl-tRNA(Gln) + L-glutamate + ADP + phosphate + H(+). Allows the formation of correctly charged Gln-tRNA(Gln) through the transamidation of misacylated Glu-tRNA(Gln) in organisms which lack glutaminyl-tRNA synthetase. The reaction takes place in the presence of glutamine and ATP through an activated gamma-phospho-Glu-tRNA(Gln). The sequence is that of Glutamyl-tRNA(Gln) amidotransferase subunit A from Nitrobacter hamburgensis (strain DSM 10229 / NCIMB 13809 / X14).